A 174-amino-acid polypeptide reads, in one-letter code: DNA-directed RNA polymerase IV subunit 7 (174 aa).

The protein belongs to the eukaryotic RPB7/RPC8 RNA polymerase subunit family. In terms of assembly, component of the RNA polymerase IV complex. Interacts with NRPD1.

Its subcellular location is the nucleus. Functionally, DNA-dependent RNA polymerase catalyzes the transcription of DNA into RNA using the four ribonucleoside triphosphates as substrates. Component of RNA polymerase IV which mediates 24-nt short-interfering RNAs (siRNA) accumulation. Implicated in siRNA-directed heterochromatin formation through the action of DCL3 and AGO4, and subsequent DNA methylation-dependent silencing of targeted sequences. Essential component of a self-reinforcing loop coupling de novo DNA methylation to siRNA production. Required for intercellular but not intracellular RNA interference (RNAi) leading to systemic post-transcriptional gene silencing. Involved in the maintenance of post-transcriptional RNA silencing. In Arabidopsis thaliana (Mouse-ear cress), this protein is DNA-directed RNA polymerase IV subunit 7 (NRPD7).